Reading from the N-terminus, the 270-residue chain is tRNA pseudouridine synthase A (270 aa).

The Nucleophile role is filled by aspartate 52. Residue tyrosine 110 coordinates substrate. Residues threonine 251–leucine 270 form a disordered region.

It belongs to the tRNA pseudouridine synthase TruA family. As to quaternary structure, homodimer.

The enzyme catalyses uridine(38/39/40) in tRNA = pseudouridine(38/39/40) in tRNA. In terms of biological role, formation of pseudouridine at positions 38, 39 and 40 in the anticodon stem and loop of transfer RNAs. In Roseiflexus sp. (strain RS-1), this protein is tRNA pseudouridine synthase A.